Consider the following 186-residue polypeptide: Small ribosomal subunit protein uS5 (186 aa).

An S5 DRBM domain is found at 20 to 83 (FVDKLVHINR…EAAKRDMIFV (64 aa)).

The protein belongs to the universal ribosomal protein uS5 family. Part of the 30S ribosomal subunit. Contacts proteins S4 and S8.

In terms of biological role, with S4 and S12 plays an important role in translational accuracy. Its function is as follows. Located at the back of the 30S subunit body where it stabilizes the conformation of the head with respect to the body. This is Small ribosomal subunit protein uS5 from Brucella ovis (strain ATCC 25840 / 63/290 / NCTC 10512).